The chain runs to 452 residues: tRNA modification GTPase MnmE (452 aa).

(6S)-5-formyl-5,6,7,8-tetrahydrofolate is bound by residues Arg-22, Glu-80, and Lys-119. The 163-residue stretch at 213-375 folds into the TrmE-type G domain; sequence GVRTVIVGKP…LENKIYEKFF (163 aa). Asn-223 contacts K(+). GTP-binding positions include 223-228, 242-248, and 267-270; these read NSGKST, TDIPGTT, and DTAG. Ser-227 contacts Mg(2+). 3 residues coordinate K(+): Thr-242, Ile-244, and Thr-247. Thr-248 contacts Mg(2+). A (6S)-5-formyl-5,6,7,8-tetrahydrofolate-binding site is contributed by Lys-452.

This sequence belongs to the TRAFAC class TrmE-Era-EngA-EngB-Septin-like GTPase superfamily. TrmE GTPase family. Homodimer. Heterotetramer of two MnmE and two MnmG subunits. It depends on K(+) as a cofactor.

The protein resides in the cytoplasm. Functionally, exhibits a very high intrinsic GTPase hydrolysis rate. Involved in the addition of a carboxymethylaminomethyl (cmnm) group at the wobble position (U34) of certain tRNAs, forming tRNA-cmnm(5)s(2)U34. This chain is tRNA modification GTPase MnmE, found in Petrotoga mobilis (strain DSM 10674 / SJ95).